The sequence spans 164 residues: 6,7-dimethyl-8-ribityllumazine synthase (164 aa).

Residues F24, 58 to 60 (ALE), and 82 to 84 (AVI) contribute to the 5-amino-6-(D-ribitylamino)uracil site. 87 to 88 (ET) contacts (2S)-2-hydroxy-3-oxobutyl phosphate. H90 serves as the catalytic Proton donor. N115 is a binding site for 5-amino-6-(D-ribitylamino)uracil. R129 provides a ligand contact to (2S)-2-hydroxy-3-oxobutyl phosphate.

Belongs to the DMRL synthase family.

It carries out the reaction (2S)-2-hydroxy-3-oxobutyl phosphate + 5-amino-6-(D-ribitylamino)uracil = 6,7-dimethyl-8-(1-D-ribityl)lumazine + phosphate + 2 H2O + H(+). It functions in the pathway cofactor biosynthesis; riboflavin biosynthesis; riboflavin from 2-hydroxy-3-oxobutyl phosphate and 5-amino-6-(D-ribitylamino)uracil: step 1/2. Its function is as follows. Catalyzes the formation of 6,7-dimethyl-8-ribityllumazine by condensation of 5-amino-6-(D-ribitylamino)uracil with 3,4-dihydroxy-2-butanone 4-phosphate. This is the penultimate step in the biosynthesis of riboflavin. The sequence is that of 6,7-dimethyl-8-ribityllumazine synthase from Ralstonia nicotianae (strain ATCC BAA-1114 / GMI1000) (Ralstonia solanacearum).